The following is a 474-amino-acid chain: Gamma-aminobutyric acid receptor subunit gamma-2 (474 aa).

The signal sequence occupies residues 1–38 (MSSPNTWSIGSSVYSPVFSQKMTLWILLLLSLYPGFTS). Residues 39-274 (QKSDDDYEDY…FDLSRRMGYF (236 aa)) are Extracellular-facing. N-linked (GlcNAc...) asparagine glycans are attached at residues N51 and N128. Cysteines 189 and 203 form a disulfide. Residue N246 is glycosylated (N-linked (GlcNAc...) asparagine). The helical transmembrane segment at 275–295 (TIQTYIPCTLIVVLSWVSFWI) threads the bilayer. The Cytoplasmic segment spans residues 296–301 (NKDAVP). Residues 302-321 (ARTSLGITTVLTMTTLSTIA) traverse the membrane as a helical segment. Over 322-333 (RKSLPKVSYVTA) the chain is Extracellular. Residues 334–358 (MDLFVSVCFIFVFSALVEYGTLHYF) form a helical membrane-spanning segment. The Cytoplasmic portion of the chain corresponds to 359-450 (VSNRKPSKDK…IHIRIAKMDS (92 aa)). S381 carries the phosphoserine; by PKC modification. A helical membrane pass occupies residues 451 to 472 (YARIFFPTAFCLFNLVYWVSYL). At 473–474 (YL) the chain is on the extracellular side.

Belongs to the ligand-gated ion channel (TC 1.A.9) family. Gamma-aminobutyric acid receptor (TC 1.A.9.5) subfamily. GABRG2 sub-subfamily. Heteropentamer, formed by a combination of alpha (GABRA1-6), beta (GABRB1-3), gamma (GABRG1-3), delta (GABRD), epsilon (GABRE), rho (GABRR1-3), pi (GABRP) and theta (GABRQ) chains, each subunit exhibiting distinct physiological and pharmacological properties. Interacts with GABARAP. Interacts with KIF21B. Identified in a complex of 720 kDa composed of LHFPL4, NLGN2, GABRA1, GABRB2, GABRG2 and GABRB3. Interacts with LHFPL4. Interacts with SHISA7; interaction leads to the regulation of GABA(A) receptor trafficking, channel deactivation kinetics and pharmacology. In terms of processing, glycosylated. Post-translationally, palmitoylated by ZDHHC3/GODZ; required for the accumulation of GABA(A) receptors at the postsynaptic membrane of inhibitory GABAergic synapses. In terms of tissue distribution, expressed in brain neurons (at protein level).

Its subcellular location is the postsynaptic cell membrane. The protein localises to the cell membrane. It localises to the cell projection. The protein resides in the dendrite. It is found in the cytoplasmic vesicle membrane. The enzyme catalyses chloride(in) = chloride(out). With respect to regulation, allosterically activated by benzodiazepines. Activated by pentobarbital. Inhibited by the antagonist bicuculline. Inhibited by zinc ions. Potentiated by histamine. Gamma subunit of the heteropentameric ligand-gated chloride channel gated by gamma-aminobutyric acid (GABA), a major inhibitory neurotransmitter in the brain. GABA-gated chloride channels, also named GABA(A) receptors (GABAAR), consist of five subunits arranged around a central pore and contain GABA active binding site(s) located at the alpha and beta subunit interface(s). When activated by GABA, GABAARs selectively allow the flow of chloride anions across the cell membrane down their electrochemical gradient. Gamma-2/GABRG2-containing GABAARs are found at both synaptic and extrasynaptic sites. Chloride influx into the postsynaptic neuron following GABAAR opening decreases the neuron ability to generate a new action potential, thereby reducing nerve transmission. GABAARs containing alpha-1 and beta-2 or -3 subunits exhibit synaptogenic activity; the gamma-2 subunit being necessary but not sufficient to induce rapid synaptic contacts formation. Extrasynaptic gamma-2-containing receptors contribute to the tonic GABAergic inhibition. GABAARs function also as histamine receptor where histamine binds at the interface of two neighboring beta subunits and potentiates GABA response in a gamma-2 subunit-controlled manner. The protein is Gamma-aminobutyric acid receptor subunit gamma-2 of Mus musculus (Mouse).